Reading from the N-terminus, the 380-residue chain is Putative ankyrin repeat protein RF_1306 (380 aa).

ANK repeat units lie at residues N48–A76, K80–P109, Y112–K143, N170–I199, L203–T233, L239–K268, L270–Y299, L303–Y333, and S337–Y366.

This Rickettsia felis (strain ATCC VR-1525 / URRWXCal2) (Rickettsia azadi) protein is Putative ankyrin repeat protein RF_1306.